Reading from the N-terminus, the 93-residue chain is U8-theraphotoxin-Hs1b (93 aa).

The first 18 residues, 1 to 18 (MKAILLLAIFSVLTVAIC), serve as a signal peptide directing secretion. Disulfide bonds link Cys-40-Cys-54, Cys-40-Cys-81, Cys-53-Cys-66, and Cys-84-Cys-91.

This sequence belongs to the neurotoxin 27 (Jztx-72) family. ICK-72 subfamily. As to expression, expressed by the venom gland.

It localises to the secreted. Probable neurotoxin with ion channel impairing activity. This is U8-theraphotoxin-Hs1b from Cyriopagopus schmidti (Chinese bird spider).